Consider the following 107-residue polypeptide: Integration host factor subunit beta (107 aa).

Residues 87–107 (RERVNNGTRKNGGSADAASGG) are disordered.

It belongs to the bacterial histone-like protein family. In terms of assembly, heterodimer of an alpha and a beta chain.

Its function is as follows. This protein is one of the two subunits of integration host factor, a specific DNA-binding protein that functions in genetic recombination as well as in transcriptional and translational control. The sequence is that of Integration host factor subunit beta from Granulibacter bethesdensis (strain ATCC BAA-1260 / CGDNIH1).